The following is a 709-amino-acid chain: ATP-dependent RNA helicase dbp7 (709 aa).

The tract at residues 13–90 is disordered; that stretch reads DNAQSRKPEA…KPAHELKGNK (78 aa). The segment covering 16-34 has biased composition (basic and acidic residues); sequence QSRKPEALKSSRRWTDRAR. Residues 44-65 are compositionally biased toward polar residues; that stretch reads NESSKSTVKRNSGTNGASTDYK. Basic and acidic residues predominate over residues 66–90; that stretch reads NSQKEKVINPVFDPRKPAHELKGNK. The Q motif signature appears at 138 to 167; the sequence is TNFAGVQLDTQLADHLNNKMNISAPTAIQS. The 195-residue stretch at 172–366 folds into the Helicase ATP-binding domain; sequence ALLNTDDKDA…DSALKDALYL (195 aa). Residue 185–192 participates in ATP binding; it reads AQTGSGKT. The DEAD box signature appears at 301–304; that stretch reads DEGD. The Helicase C-terminal domain occupies 404-580; the sequence is LLRSHVRSYK…EQPNGPSGLL (177 aa). Residues 662-690 form a disordered region; that stretch reads GKISGANSSKPRKQGGSVDKGKSKSSKDI.

The protein belongs to the DEAD box helicase family. DDX31/DBP7 subfamily.

Its subcellular location is the nucleus. It localises to the nucleolus. It carries out the reaction ATP + H2O = ADP + phosphate + H(+). ATP-binding RNA helicase involved in the biogenesis of 60S ribosomal subunits and is required for the normal formation of 25S and 5.8S rRNAs. In Schizosaccharomyces pombe (strain 972 / ATCC 24843) (Fission yeast), this protein is ATP-dependent RNA helicase dbp7 (dbp7).